The primary structure comprises 821 residues: DNA replication licensing factor MCM6 (821 aa).

Residue M1 is modified to N-acetylmethionine. 3 positions are modified to phosphoserine: S13, S219, and S271. Phosphothreonine is present on T278. The region spanning 346–553 (LYHNLCTSLF…TDYAIARRIV (208 aa)) is the MCM domain. Residues H359, S399, T400, A401, K402, S403, and N504 each contribute to the ATP site. The short motif at 528-531 (SRFD) is the Arginine finger element. ADP-binding residues include R619 and E622. K643 carries the N6-acetyllysine modification. The interval 676 to 708 (TDEGQGGVNGHADSPAPVNRFNGSSEDASQETV) is disordered. Phosphoserine occurs at positions 689, 704, and 762. Residues 696 to 708 (FNGSSEDASQETV) show a composition bias toward polar residues. Phosphothreonine is present on T791.

The protein belongs to the MCM family. In terms of assembly, component of the MCM2-7 complex. The complex forms a toroidal hexameric ring with the proposed subunit order MCM2-MCM6-MCM4-MCM7-MCM3-MCM5. Component of the CMG helicase complex, a hexameric ring of related MCM2-7 subunits stabilized by CDC45 and the tetrameric GINS complex. May interact with MCM10. Interacts with TIPIN. Interacts with CDT1. Interacts with MCMBP. Interacts with DDI2. O-glycosylated (O-GlcNAcylated), in a cell cycle-dependent manner.

It localises to the nucleus. It is found in the chromosome. The enzyme catalyses ATP + H2O = ADP + phosphate + H(+). In terms of biological role, acts as a component of the MCM2-7 complex (MCM complex) which is the replicative helicase essential for 'once per cell cycle' DNA replication initiation and elongation in eukaryotic cells. Core component of CDC45-MCM-GINS (CMG) helicase, the molecular machine that unwinds template DNA during replication, and around which the replisome is built. The active ATPase sites in the MCM2-7 ring are formed through the interaction surfaces of two neighboring subunits such that a critical structure of a conserved arginine finger motif is provided in trans relative to the ATP-binding site of the Walker A box of the adjacent subunit. The six ATPase active sites, however, are likely to contribute differentially to the complex helicase activity. The polypeptide is DNA replication licensing factor MCM6 (Mcm6) (Mus musculus (Mouse)).